A 109-amino-acid chain; its full sequence is Protein phosphatase 1 regulatory subunit 1C (109 aa).

A disordered region spans residues 25-109 (AEQIRKRRPT…TNEREEQRDH (85 aa)). Over residues 45–54 (NPPEIDDKRV) the composition is skewed to basic and acidic residues. Residues 55-75 (PNTQGELQNASPKQRKQSVYT) show a composition bias toward polar residues. Basic and acidic residues predominate over residues 100 to 109 (TNEREEQRDH).

This sequence belongs to the protein phosphatase inhibitor 1 family.

The protein resides in the cytoplasm. In terms of biological role, may increase cell susceptibility to TNF-induced apoptosis. This chain is Protein phosphatase 1 regulatory subunit 1C (PPP1R1C), found in Pongo abelii (Sumatran orangutan).